An 849-amino-acid chain; its full sequence is DNA mismatch repair protein MutS (849 aa).

665 to 672 lines the ATP pocket; that stretch reads GPNMAGKS.

The protein belongs to the DNA mismatch repair MutS family.

This protein is involved in the repair of mismatches in DNA. It is possible that it carries out the mismatch recognition step. This protein has a weak ATPase activity. This Wolbachia pipientis wMel protein is DNA mismatch repair protein MutS.